A 166-amino-acid polypeptide reads, in one-letter code: Large ribosomal subunit protein uL10 (166 aa).

This sequence belongs to the universal ribosomal protein uL10 family. In terms of assembly, part of the ribosomal stalk of the 50S ribosomal subunit. The N-terminus interacts with L11 and the large rRNA to form the base of the stalk. The C-terminus forms an elongated spine to which L12 dimers bind in a sequential fashion forming a multimeric L10(L12)X complex.

Forms part of the ribosomal stalk, playing a central role in the interaction of the ribosome with GTP-bound translation factors. The protein is Large ribosomal subunit protein uL10 of Streptococcus sanguinis (strain SK36).